The sequence spans 508 residues: UDP-N-acetylmuramoyl-L-alanyl-D-glutamate--2,6-diaminopimelate ligase (508 aa).

Position 29 (S29) interacts with UDP-N-acetyl-alpha-D-muramoyl-L-alanyl-D-glutamate. Residue 112–118 participates in ATP binding; the sequence is GTNGKTS. Residues 159-160, S186, Q192, and R194 each bind UDP-N-acetyl-alpha-D-muramoyl-L-alanyl-D-glutamate; that span reads TT. Residue K226 is modified to N6-carboxylysine. Meso-2,6-diaminopimelate contacts are provided by residues R398, 421–424, G473, and E477; that span reads DNPR. Positions 421–424 match the Meso-diaminopimelate recognition motif motif; it reads DNPR.

Belongs to the MurCDEF family. MurE subfamily. Requires Mg(2+) as cofactor. In terms of processing, carboxylation is probably crucial for Mg(2+) binding and, consequently, for the gamma-phosphate positioning of ATP.

Its subcellular location is the cytoplasm. It carries out the reaction UDP-N-acetyl-alpha-D-muramoyl-L-alanyl-D-glutamate + meso-2,6-diaminopimelate + ATP = UDP-N-acetyl-alpha-D-muramoyl-L-alanyl-gamma-D-glutamyl-meso-2,6-diaminopimelate + ADP + phosphate + H(+). It functions in the pathway cell wall biogenesis; peptidoglycan biosynthesis. Its function is as follows. Catalyzes the addition of meso-diaminopimelic acid to the nucleotide precursor UDP-N-acetylmuramoyl-L-alanyl-D-glutamate (UMAG) in the biosynthesis of bacterial cell-wall peptidoglycan. This Janthinobacterium sp. (strain Marseille) (Minibacterium massiliensis) protein is UDP-N-acetylmuramoyl-L-alanyl-D-glutamate--2,6-diaminopimelate ligase.